The following is a 64-amino-acid chain: Small, acid-soluble spore protein beta (64 aa).

Belongs to the alpha/beta-type SASP family.

Its function is as follows. SASP are bound to spore DNA. They are double-stranded DNA-binding proteins that cause DNA to change to an a-like conformation. They protect the DNA backbone from chemical and enzymatic cleavage and are thus involved in dormant spore's high resistance to UV light. This is Small, acid-soluble spore protein beta from Paraclostridium bifermentans (Clostridium bifermentans).